The sequence spans 210 residues: Cytochrome c oxidase subunit 2 (210 aa).

The Mitochondrial intermembrane segment spans residues 1–15; sequence MSFILTFWMIFLMDS. The chain crosses the membrane as a helical span at residues 16–36; sequence IIVLISFSIFLSVWICALIIA. At 37–63 the chain is on the mitochondrial matrix side; it reads TVLTVTKINNIYCTWDFISSKFIDTYW. The chain crosses the membrane as a helical span at residues 64–84; it reads FVLGMMFILCLLLRLCLLLYF. Topologically, residues 85 to 210 are mitochondrial intermembrane; that stretch reads SCINFVSFDL…GFMPIVINFI (126 aa). Cu cation contacts are provided by His-157, Cys-192, Glu-194, Cys-196, His-200, and Met-203. Glu-194 lines the Mg(2+) pocket.

The protein belongs to the cytochrome c oxidase subunit 2 family. As to quaternary structure, component of the cytochrome c oxidase (complex IV, CIV), a multisubunit enzyme composed of a catalytic core of 3 subunits and several supernumerary subunits. The complex exists as a monomer or a dimer and forms supercomplexes (SCs) in the inner mitochondrial membrane with ubiquinol-cytochrome c oxidoreductase (cytochrome b-c1 complex, complex III, CIII). Cu cation is required as a cofactor.

It is found in the mitochondrion inner membrane. It carries out the reaction 4 Fe(II)-[cytochrome c] + O2 + 8 H(+)(in) = 4 Fe(III)-[cytochrome c] + 2 H2O + 4 H(+)(out). Component of the cytochrome c oxidase, the last enzyme in the mitochondrial electron transport chain which drives oxidative phosphorylation. The respiratory chain contains 3 multisubunit complexes succinate dehydrogenase (complex II, CII), ubiquinol-cytochrome c oxidoreductase (cytochrome b-c1 complex, complex III, CIII) and cytochrome c oxidase (complex IV, CIV), that cooperate to transfer electrons derived from NADH and succinate to molecular oxygen, creating an electrochemical gradient over the inner membrane that drives transmembrane transport and the ATP synthase. Cytochrome c oxidase is the component of the respiratory chain that catalyzes the reduction of oxygen to water. Electrons originating from reduced cytochrome c in the intermembrane space (IMS) are transferred via the dinuclear copper A center (CU(A)) of subunit 2 and heme A of subunit 1 to the active site in subunit 1, a binuclear center (BNC) formed by heme A3 and copper B (CU(B)). The BNC reduces molecular oxygen to 2 water molecules using 4 electrons from cytochrome c in the IMS and 4 protons from the mitochondrial matrix. This is Cytochrome c oxidase subunit 2 (COXII) from Trypanosoma brucei brucei.